The chain runs to 350 residues: Core protein VP7 (350 aa).

A glycan (N-linked (GlcNAc...) asparagine; by host) is linked at N45.

It belongs to the orbivirus VP7 family. Homotrimer.

The protein resides in the virion. In terms of biological role, major structural core protein; binds to structural protein VP3. Constitutes the surface of the AHSV core. In African horse sickness virus (AHSV), this protein is Core protein VP7 (Segment-7).